The chain runs to 84 residues: Large ribosomal subunit protein bL27 (84 aa).

A disordered region spans residues 1–25 (MAHKKAGGSSKNGRDSAGKRLGVKR).

This sequence belongs to the bacterial ribosomal protein bL27 family.

This Syntrophotalea carbinolica (strain DSM 2380 / NBRC 103641 / GraBd1) (Pelobacter carbinolicus) protein is Large ribosomal subunit protein bL27.